Here is a 49-residue protein sequence, read N- to C-terminus: Small, acid-soluble spore protein K (49 aa).

The disordered stretch occupies residues 1 to 49 (MRNKAKGFPNQVNHKFEGEPGATDAYASKRPNGETNTRPQERMRASGKR). Positions 39-49 (PQERMRASGKR) are enriched in basic and acidic residues.

This sequence belongs to the SspK family.

Its subcellular location is the spore core. The chain is Small, acid-soluble spore protein K from Bacillus pumilus (strain SAFR-032).